The following is a 148-amino-acid chain: Sec-independent protein translocase protein TatB (148 aa).

A helical membrane pass occupies residues 2–22 (FNDIGPLELVTLVVLAVLVFG). Composition is skewed to basic and acidic residues over residues 100 to 110 (VTDAVHGRESE) and 128 to 148 (MTKKREQLEADERPPFDADAT). The tract at residues 100 to 148 (VTDAVHGRESETSASSSSANGSAGGTVDMTKKREQLEADERPPFDADAT) is disordered.

It belongs to the TatB family. The Tat system comprises two distinct complexes: a TatABC complex, containing multiple copies of TatA, TatB and TatC subunits, and a separate TatA complex, containing only TatA subunits. Substrates initially bind to the TatABC complex, which probably triggers association of the separate TatA complex to form the active translocon.

Its subcellular location is the cell membrane. Its function is as follows. Part of the twin-arginine translocation (Tat) system that transports large folded proteins containing a characteristic twin-arginine motif in their signal peptide across membranes. Together with TatC, TatB is part of a receptor directly interacting with Tat signal peptides. TatB may form an oligomeric binding site that transiently accommodates folded Tat precursor proteins before their translocation. The protein is Sec-independent protein translocase protein TatB of Streptomyces avermitilis (strain ATCC 31267 / DSM 46492 / JCM 5070 / NBRC 14893 / NCIMB 12804 / NRRL 8165 / MA-4680).